Consider the following 103-residue polypeptide: Protein translation factor SUI1 homolog (103 aa).

The protein belongs to the SUI1 family.

In Methanocaldococcus jannaschii (strain ATCC 43067 / DSM 2661 / JAL-1 / JCM 10045 / NBRC 100440) (Methanococcus jannaschii), this protein is Protein translation factor SUI1 homolog.